A 787-amino-acid polypeptide reads, in one-letter code: MSRFVDKLPLFDRRPSPMEEAEGLPRSGYLGQLHHHQYYQPHSNMLPLEQSPPTSTKHTSVTLAQLLKRVNDARSGSSTPISSPRYTIELGGSKPESVSSESDDHHSDDGGSEGQPRALVLKFTDLTYSVKQRRKGSCLPFRRAAADEPELPAMRTLLDGISGEARDGEIMAVLGASGSGKSTLIDALANRIAKESLHGSVTINGESIDSNLLKVISAYVRQEDLLYPMLTVEETLMFAAEFRLPRSLPTREKKKRVKELIDQLGLKRAANTIIGDEGHRGVSGGERRRVSIGVDIIHNPIMLFLDEPTSGLDSTSAFMVVTVLKAIAQSGSVVVMSIHQPSYRILGLLDRLLFLSRGKTVYYGPPSELPPFFLDFGKPIPDNENPTEFALDLIKEMETETEGTKRLAEHNAAWQLKHHGEGRGYGGKPGMSLKEAISASISRGKLVSGATDGTVSVAASDHSAPPPSSSSVSKFVNPFWIEMGVLTRRAFINTKRTPEVFIIRLAAVLVTGFILATIFWRLDESPKGVQERLGFFAIAMSTMYYTCSDALPVFLSERYIFLRETAYNAYRRSSYVLSHTIVGFPSLVVLSFAFALTTFFSVGLAGGVNGFFYFVAIVLASFWAGSGFATFLSGVVTHVMLGFPVVLSTLAYFLLFSGFFINRDRIPRYWLWFHYISLVKYPYEAVMQNEFGDPTRCFVRGVQMFDNTPLAALPAAVKVRVLQSMSASLGVNIGTGTCITTGPDFLKQQAITDFGKWECLWITVAWGFLFRILFYISLLLGSRNKRR.

Over residues 1–17 (MSRFVDKLPLFDRRPSP) the composition is skewed to basic and acidic residues. Disordered stretches follow at residues 1 to 25 (MSRF…EGLP) and 71 to 116 (NDAR…EGQP). Over residues 74-85 (RSGSSTPISSPR) the composition is skewed to polar residues. The ABC transporter domain occupies 121–382 (LKFTDLTYSV…FLDFGKPIPD (262 aa)). 175 to 182 (GASGSGKS) contacts ATP. The ABC transmembrane type-2 domain maps to 484 to 691 (GVLTRRAFIN…PYEAVMQNEF (208 aa)). 8 helical membrane passes run 500–520 (VFII…TIFW), 535–555 (FFAI…PVFL), 576–596 (VLSH…AFAL), 599–619 (FFSV…AIVL), 620–640 (ASFW…THVM), 641–661 (LGFP…GFFI), 728–745 (SLGV…GPDF), and 760–780 (LWIT…SLLL).

Belongs to the ABC transporter superfamily. ABCG family. Eye pigment precursor importer (TC 3.A.1.204) subfamily. Expressed in the crown root primordia, endodermis, pericycle and stele in the root, in leaf primordia of main and axillary shoots, and in the vascular cells and leaf epidermis of older leaves.

The protein resides in the cell membrane. Essential transporter for growth and development under abiotic stress. Mediates shoot branching by promoting the outgrowth of lateral shoots. Required for salt tolerance via Na/K homeostasis, at least partly by regulating SKC1/OsHKT1;5. Necessary for hypodermal suberization of roots, which contributes to formation of the apoplastic barrier. This is ABC transporter G family member 5 from Oryza sativa subsp. japonica (Rice).